The primary structure comprises 69 residues: Putative membrane protein insertion efficiency factor (69 aa).

Belongs to the UPF0161 family.

It localises to the cell inner membrane. Functionally, could be involved in insertion of integral membrane proteins into the membrane. This chain is Putative membrane protein insertion efficiency factor, found in Aromatoleum aromaticum (strain DSM 19018 / LMG 30748 / EbN1) (Azoarcus sp. (strain EbN1)).